Here is a 489-residue protein sequence, read N- to C-terminus: Cobyric acid synthase (489 aa).

Positions 251–439 (RLTVVAPVYP…LHGLFDTPAA (189 aa)) constitute a GATase cobBQ-type domain. The active-site Nucleophile is the C332. The active site involves H431.

This sequence belongs to the CobB/CobQ family. CobQ subfamily.

Its pathway is cofactor biosynthesis; adenosylcobalamin biosynthesis. In terms of biological role, catalyzes amidations at positions B, D, E, and G on adenosylcobyrinic A,C-diamide. NH(2) groups are provided by glutamine, and one molecule of ATP is hydrogenolyzed for each amidation. In Aromatoleum aromaticum (strain DSM 19018 / LMG 30748 / EbN1) (Azoarcus sp. (strain EbN1)), this protein is Cobyric acid synthase.